A 379-amino-acid chain; its full sequence is Putative acetyl-CoA C-acetyltransferase VraB (379 aa).

C86 acts as the Acyl-thioester intermediate in catalysis. The Proton acceptor role is filled by H338.

Belongs to the thiolase-like superfamily. Thiolase family.

The polypeptide is Putative acetyl-CoA C-acetyltransferase VraB (vraB) (Staphylococcus aureus (strain MSSA476)).